The following is a 216-amino-acid chain: LHFPL tetraspan subfamily member 3 protein (216 aa).

4 helical membrane-spanning segments follow: residues 22–42, 96–116, 126–146, and 177–197; these read IGVLWAIFTTLFAIVNVVCFV, FFIGMSMVLVLSCIGCFALFF, ICGWMQLAAGTCLVLGCMIYP, and ILAIMGILDALILSFLAFVLG.

It belongs to the LHFP family.

It is found in the membrane. This chain is LHFPL tetraspan subfamily member 3 protein, found in Danio rerio (Zebrafish).